Reading from the N-terminus, the 58-residue chain is U8-ctenitoxin-Pr1a (58 aa).

5 disulfide bridges follow: Cys2-Cys16, Cys9-Cys22, Cys15-Cys40, Cys24-Cys38, and Cys48-Cys55.

In terms of tissue distribution, expressed by the venom gland.

Its subcellular location is the secreted. No toxic effects on mice at dose levels of 5 ug per mouse. May be toxic to insects. The protein is U8-ctenitoxin-Pr1a of Phoneutria reidyi (Brazilian Amazonian armed spider).